A 510-amino-acid chain; its full sequence is NAD(P)H-quinone oxidoreductase subunit 2 A, chloroplastic (510 aa).

The next 13 helical transmembrane spans lie at 24 to 44 (LLLFDGSLIFPECILIFGLIL), 57 to 77 (IPWLYFISSTSLVMSITALLF), 99 to 119 (IFQFLILLCSTLCIPLSVEYI), 124 to 144 (MAITEFLLFVLTATLGGMFLC), 149 to 169 (LITIFVAPECFSLCSYLLSGY), 183 to 203 (YLLMGGASSSILVHGFSWLYG), 227 to 247 (PGISIALIFITVGIGFKLSPA), 295 to 315 (WHLLLEILAILSMILGNLIAI), 323 to 343 (MLAYSSIGQIGYVIIGIIVGD), 354 to 374 (YMLFYISMNLGTFACIVLFGL), 395 to 415 (ALSLALCLLSLGGLPPLAGFF), 418 to 438 (LYLFWCGWQAGLYFLVLIGLL), and 484 to 504 (MIVCVIASTIPGISMNPIIAI).

The protein belongs to the complex I subunit 2 family. NDH is composed of at least 16 different subunits, 5 of which are encoded in the nucleus.

It localises to the plastid. The protein resides in the chloroplast thylakoid membrane. The catalysed reaction is a plastoquinone + NADH + (n+1) H(+)(in) = a plastoquinol + NAD(+) + n H(+)(out). It catalyses the reaction a plastoquinone + NADPH + (n+1) H(+)(in) = a plastoquinol + NADP(+) + n H(+)(out). In terms of biological role, NDH shuttles electrons from NAD(P)H:plastoquinone, via FMN and iron-sulfur (Fe-S) centers, to quinones in the photosynthetic chain and possibly in a chloroplast respiratory chain. The immediate electron acceptor for the enzyme in this species is believed to be plastoquinone. Couples the redox reaction to proton translocation, and thus conserves the redox energy in a proton gradient. This chain is NAD(P)H-quinone oxidoreductase subunit 2 A, chloroplastic, found in Panax ginseng (Korean ginseng).